We begin with the raw amino-acid sequence, 522 residues long: E3 ubiquitin-protein ligase DMA2 (522 aa).

Disordered stretches follow at residues 1-56 (MYTP…RPAS) and 69-92 (QNSQ…PSNS). The segment covering 14 to 35 (APTSSMTSNSSSASNANTTSSS) has biased composition (low complexity). A compositionally biased stretch (polar residues) spans 36 to 49 (GINPRNRASGTPSN). S206 carries the phosphoserine modification. Glycyl lysine isopeptide (Lys-Gly) (interchain with G-Cter in ubiquitin) cross-links involve residues K211, K256, K258, K288, K310, K333, K343, K346, K366, K406, K412, and K423. The FHA domain maps to 295-358 (LVIGRYTERV…SGTFLNHQRL (64 aa)). An RING-type zinc finger spans residues 433–477 (CSICLCKIKPCQAIFISPCAHSWHFRCVRRLVMLSYPQFVCPNCR).

Belongs to the DMA1 family. Post-translationally, UBC4-dependent autoubiquitination occurs at Lys-211, Lys-258, Lys-288, Lys-310, Lys-333, Lys-343, Lys-346, Lys-366, Lys-406, Lys-412 and Lys-423. UBC4-dependent autoubiquitination is responsible for DMA2 turnover. UBC13/MMS2-dependent autoubiquitination occurs at Lys-258, Lys-310, Lys-346 and Lys-366. Lys-211, Lys-256, Lys-288, Lys-310, Lys-343, Lys-258, Lys-366 and Lys-412 are also ubiquitinated in trans by DMA1 E3 ligase in association with UBC4.

It localises to the cytoplasm. The catalysed reaction is S-ubiquitinyl-[E2 ubiquitin-conjugating enzyme]-L-cysteine + [acceptor protein]-L-lysine = [E2 ubiquitin-conjugating enzyme]-L-cysteine + N(6)-ubiquitinyl-[acceptor protein]-L-lysine.. In terms of biological role, E3 ubiquitin-protein ligase which functions in cell cycle retarding in conjunction with the UBC4 and UBC13/MMS2 complex, 2 E2 ubiquitin conjugating enzymes. Involved in nutritional control of the cell cycle. Required for proper spindle positioning, likely regulating septin ring deposition at the bud neck. This chain is E3 ubiquitin-protein ligase DMA2 (DMA2), found in Saccharomyces cerevisiae (strain ATCC 204508 / S288c) (Baker's yeast).